The primary structure comprises 324 residues: Protoheme IX farnesyltransferase (324 aa).

A run of 9 helical transmembrane segments spans residues 31-51 (LILL…SGQV), 56-76 (FLTT…INCI), 105-125 (VFAA…ANLL), 126-146 (SACL…YWLK), 153-173 (IVIG…AVTG), 181-201 (VLFA…AMMI), 214-234 (PVVN…LLLL), 238-258 (LLLV…AIVL), and 285-305 (FSIL…LPWT).

It belongs to the UbiA prenyltransferase family. Protoheme IX farnesyltransferase subfamily.

It localises to the cell inner membrane. It catalyses the reaction heme b + (2E,6E)-farnesyl diphosphate + H2O = Fe(II)-heme o + diphosphate. It participates in porphyrin-containing compound metabolism; heme O biosynthesis; heme O from protoheme: step 1/1. In terms of biological role, converts heme B (protoheme IX) to heme O by substitution of the vinyl group on carbon 2 of heme B porphyrin ring with a hydroxyethyl farnesyl side group. The chain is Protoheme IX farnesyltransferase from Acaryochloris marina (strain MBIC 11017).